The chain runs to 101 residues: Urease subunit beta (101 aa).

It belongs to the urease beta subunit family. In terms of assembly, heterotrimer of UreA (gamma), UreB (beta) and UreC (alpha) subunits. Three heterotrimers associate to form the active enzyme.

Its subcellular location is the cytoplasm. The catalysed reaction is urea + 2 H2O + H(+) = hydrogencarbonate + 2 NH4(+). It participates in nitrogen metabolism; urea degradation; CO(2) and NH(3) from urea (urease route): step 1/1. This chain is Urease subunit beta, found in Bradyrhizobium diazoefficiens (strain JCM 10833 / BCRC 13528 / IAM 13628 / NBRC 14792 / USDA 110).